An 87-amino-acid polypeptide reads, in one-letter code: Costars family protein (87 aa).

Belongs to the costars family.

This chain is Costars family protein, found in Oryza sativa subsp. indica (Rice).